The following is a 156-amino-acid chain: uncharacterized protein (156 aa).

Positions 1–22 (MFGKVSSLLVFASFLIIQGAFA) are cleaved as a signal peptide. Ser129 carries GPI-anchor amidated serine lipidation. Residues 130–156 (GSPVRFSKSSLLIVSLLSIAAFAALVL) constitute a propeptide, removed in mature form.

It is found in the cell membrane. This is an uncharacterized protein from Schizosaccharomyces pombe (strain 972 / ATCC 24843) (Fission yeast).